A 315-amino-acid chain; its full sequence is Acetyl-coenzyme A carboxylase carboxyl transferase subunit alpha (315 aa).

One can recognise a CoA carboxyltransferase C-terminal domain in the interval 38–292 (RLQKKSNELT…KLRLKEDLAE (255 aa)).

Belongs to the AccA family. In terms of assembly, acetyl-CoA carboxylase is a heterohexamer composed of biotin carboxyl carrier protein (AccB), biotin carboxylase (AccC) and two subunits each of ACCase subunit alpha (AccA) and ACCase subunit beta (AccD).

The protein resides in the cytoplasm. The catalysed reaction is N(6)-carboxybiotinyl-L-lysyl-[protein] + acetyl-CoA = N(6)-biotinyl-L-lysyl-[protein] + malonyl-CoA. Its pathway is lipid metabolism; malonyl-CoA biosynthesis; malonyl-CoA from acetyl-CoA: step 1/1. Its function is as follows. Component of the acetyl coenzyme A carboxylase (ACC) complex. First, biotin carboxylase catalyzes the carboxylation of biotin on its carrier protein (BCCP) and then the CO(2) group is transferred by the carboxyltransferase to acetyl-CoA to form malonyl-CoA. This chain is Acetyl-coenzyme A carboxylase carboxyl transferase subunit alpha, found in Haemophilus influenzae (strain 86-028NP).